We begin with the raw amino-acid sequence, 705 residues long: Structure-specific endonuclease subunit SLX1 homolog (705 aa).

A GIY-YIG domain is found at 4-90 (RFHCVYLLTS…TASARLRHAI (87 aa)). Disordered stretches follow at residues 155 to 192 (RASSPRVGTQQHSQRSSSLQGQADGVATPPLPALDSKG) and 290 to 323 (ASFASDSDDEDTRRFAPYCPSTGSRTPSPQRVHT). Composition is skewed to polar residues over residues 160–175 (RVGTQQHSQRSSSLQG) and 310–320 (STGSRTPSPQR). The SLX1-type zinc-finger motif lies at 446–526 (CSLCTLPLQP…PSQPCPCPLC (81 aa)). Positions 595 to 604 (KGAGEAPGAA) are enriched in low complexity. The interval 595-628 (KGAGEAPGAASTVRASTMHVGPARRDAPRVSSPS) is disordered.

Belongs to the SLX1 family. In terms of assembly, forms a heterodimer with a member of the SLX4 family. A divalent metal cation serves as cofactor.

The protein resides in the nucleus. Its function is as follows. Catalytic subunit of a heterodimeric structure-specific endonuclease that resolves DNA secondary structures generated during DNA repair and recombination. Has endonuclease activity towards branched DNA substrates, introducing single-strand cuts in duplex DNA close to junctions with ss-DNA. This Leishmania infantum protein is Structure-specific endonuclease subunit SLX1 homolog.